Consider the following 172-residue polypeptide: Protein-export protein SecB (172 aa).

Belongs to the SecB family. As to quaternary structure, homotetramer, a dimer of dimers. One homotetramer interacts with 1 SecA dimer.

The protein localises to the cytoplasm. One of the proteins required for the normal export of preproteins out of the cell cytoplasm. It is a molecular chaperone that binds to a subset of precursor proteins, maintaining them in a translocation-competent state. It also specifically binds to its receptor SecA. The polypeptide is Protein-export protein SecB (Bordetella avium (strain 197N)).